Consider the following 435-residue polypeptide: Serine--tRNA ligase (435 aa).

An L-serine-binding site is contributed by 233–235 (TAE). ATP is bound at residue 264–266 (RAE). Glutamate 287 contacts L-serine. 351–354 (EISS) provides a ligand contact to ATP. Residue serine 386 coordinates L-serine.

It belongs to the class-II aminoacyl-tRNA synthetase family. Type-1 seryl-tRNA synthetase subfamily. Homodimer. The tRNA molecule binds across the dimer.

The protein resides in the cytoplasm. The catalysed reaction is tRNA(Ser) + L-serine + ATP = L-seryl-tRNA(Ser) + AMP + diphosphate + H(+). It catalyses the reaction tRNA(Sec) + L-serine + ATP = L-seryl-tRNA(Sec) + AMP + diphosphate + H(+). The protein operates within aminoacyl-tRNA biosynthesis; selenocysteinyl-tRNA(Sec) biosynthesis; L-seryl-tRNA(Sec) from L-serine and tRNA(Sec): step 1/1. In terms of biological role, catalyzes the attachment of serine to tRNA(Ser). Is also able to aminoacylate tRNA(Sec) with serine, to form the misacylated tRNA L-seryl-tRNA(Sec), which will be further converted into selenocysteinyl-tRNA(Sec). This is Serine--tRNA ligase from Anaeromyxobacter sp. (strain K).